The primary structure comprises 462 residues: Violaxanthin de-epoxidase, chloroplastic (462 aa).

The cysteines at positions 231 and 362 are disulfide-linked. Positions 372–437 (IEKTVEEGER…RELSKEEMEF (66 aa)) form a coiled coil. The involved in the binding to the thylakoid membrane stretch occupies residues 380–391 (ERIIVKEVEEIE).

The protein belongs to the calycin superfamily. Lipocalin family. Interacts in vitro with LTO1.

The protein localises to the plastid. It is found in the chloroplast thylakoid membrane. It carries out the reaction all-trans-violaxanthin + 2 L-ascorbate = all-trans-zeaxanthin + 2 L-dehydroascorbate + 2 H2O. Activity limited by low ascorbate availability. Feedback inhibition by zeaxanthin. Requires the presence of micelle-forming lipids such as monogalactosyldiacylglyceride (MGDG). Low concentration of bilayer forming lipids, such as digalactosyldiacylglyceride (DGDG) or phosphatidylcholine, supports a slower but nearly complete activity. 80% of the specific activity in lumenal chloroplast fractions is lost in vitro in the presence of reduced thioredoxin. In terms of biological role, part of the xanthophyll (or violaxanthin) cycle for controlling the concentration of zeaxanthin in chloroplasts. Catalyzes the two-step mono de-epoxidation reaction. Stereospecific for all-trans xanthophylls. Zeaxanthin induces the dissipation of excitation energy in the chlorophyll of the light-harvesting protein complex of photosystem II. The sequence is that of Violaxanthin de-epoxidase, chloroplastic from Arabidopsis thaliana (Mouse-ear cress).